Consider the following 231-residue polypeptide: Putative aminodeoxychorismate lyase (231 aa).

The protein belongs to the class-IV pyridoxal-phosphate-dependent aminotransferase family. The cofactor is pyridoxal 5'-phosphate.

The protein localises to the cytoplasm. The protein resides in the nucleus. It carries out the reaction 4-amino-4-deoxychorismate = 4-aminobenzoate + pyruvate + H(+). The protein operates within cofactor biosynthesis; tetrahydrofolate biosynthesis; 4-aminobenzoate from chorismate: step 2/2. In terms of biological role, converts 4-amino-4-deoxychorismate into 4-aminobenzoate (PABA) and pyruvate. The polypeptide is Putative aminodeoxychorismate lyase (Schizosaccharomyces pombe (strain 972 / ATCC 24843) (Fission yeast)).